The chain runs to 202 residues: Keratin-associated protein 5-10 (202 aa).

7 tandem repeats follow at residues 48-51, 54-57, 144-147, 162-165, 172-175, 182-185, and 192-195. Positions 48–195 are 7 X 4 AA repeats of C-C-X-P; sequence CCKPVCCCVP…CCCQSSCCVP (148 aa).

The protein belongs to the KRTAP type 5 family. In terms of assembly, interacts with hair keratins. In terms of tissue distribution, expressed in hair root but not in skin. Expressed also in brain and skeletal muscle.

In the hair cortex, hair keratin intermediate filaments are embedded in an interfilamentous matrix, consisting of hair keratin-associated protein (KRTAP), which are essential for the formation of a rigid and resistant hair shaft through their extensive disulfide bond cross-linking with abundant cysteine residues of hair keratins. The matrix proteins include the high-sulfur and high-glycine-tyrosine keratins. This chain is Keratin-associated protein 5-10 (KRTAP5-10), found in Homo sapiens (Human).